The following is a 902-amino-acid chain: Inter-alpha-trypsin inhibitor heavy chain H1 (902 aa).

An N-terminal signal peptide occupies residues 1-28 (MDGTMGLQGLLCLCLASHLALQAMPTQG). The 130-residue stretch at 29–158 (SPTDSTKGNK…KATFQLTYEE (130 aa)) folds into the VIT domain. Cysteine 52 carries an S-linked (Hex...) cysteine glycan. Residue asparagine 69 is glycosylated (N-linked (GlcNAc...) asparagine). The residue at position 121 (serine 121) is a Phosphoserine. Asparagine 277 is a glycosylation site (N-linked (GlcNAc...) asparagine). Residues 282 to 442 (NKNVVFVIDI…WNFLEVRALE (161 aa)) form the VWFA domain. 2 positions are modified to phosphothreonine: threonine 394 and threonine 399. Residues 637-651 (SASQPSPTHPSSSIQ) show a composition bias toward polar residues. Residues 637–656 (SASQPSPTHPSSSIQKLPDR) form a disordered region. A glycan (O-linked (GalNAc...) serine) is linked at serine 639. Threonine 644 carries O-linked (GalNAc...) threonine glycosylation. Residue aspartate 663 is modified to Aspartate 1-(chondroitin 4-sulfate)-ester. Residues 664–902 (PHFIIRVPQK…HTDYIVPDIF (239 aa)) constitute a propeptide that is removed on maturation. Residue asparagine 741 is glycosylated (N-linked (GlcNAc...) asparagine).

Belongs to the ITIH family. As to quaternary structure, I-alpha-I plasma protease inhibitors are assembled from one or two heavy chains (HC) and one light chain, bikunin. Inter-alpha-inhibitor (I-alpha-I) is composed of ITIH1/HC1, ITIH2/HC2 and bikunin. Interacts with TNFAIP6 (via Link and CUB domains). Post-translationally, heavy chains are linked to bikunin via chondroitin 4-sulfate esterified to the alpha-carboxyl of the C-terminal aspartate after propeptide cleavage. In terms of processing, the S-linked glycan is composed of two 6-carbon sugars, possibly Glc or Gal.

It is found in the secreted. May act as a carrier of hyaluronan in serum or as a binding protein between hyaluronan and other matrix protein, including those on cell surfaces in tissues to regulate the localization, synthesis and degradation of hyaluronan which are essential to cells undergoing biological processes. The chain is Inter-alpha-trypsin inhibitor heavy chain H1 (ITIH1) from Sus scrofa (Pig).